Here is a 404-residue protein sequence, read N- to C-terminus: Probable tRNA sulfurtransferase (404 aa).

Positions 60–165 constitute a THUMP domain; the sequence is TAVAESLKQV…EEAAYLSYET (106 aa). ATP is bound by residues 183-184, 208-209, Arg-265, Gly-287, and Gln-296; these read ML and HF.

The protein belongs to the ThiI family.

It localises to the cytoplasm. It carries out the reaction [ThiI sulfur-carrier protein]-S-sulfanyl-L-cysteine + a uridine in tRNA + 2 reduced [2Fe-2S]-[ferredoxin] + ATP + H(+) = [ThiI sulfur-carrier protein]-L-cysteine + a 4-thiouridine in tRNA + 2 oxidized [2Fe-2S]-[ferredoxin] + AMP + diphosphate. It catalyses the reaction [ThiS sulfur-carrier protein]-C-terminal Gly-Gly-AMP + S-sulfanyl-L-cysteinyl-[cysteine desulfurase] + AH2 = [ThiS sulfur-carrier protein]-C-terminal-Gly-aminoethanethioate + L-cysteinyl-[cysteine desulfurase] + A + AMP + 2 H(+). It functions in the pathway cofactor biosynthesis; thiamine diphosphate biosynthesis. Functionally, catalyzes the ATP-dependent transfer of a sulfur to tRNA to produce 4-thiouridine in position 8 of tRNAs, which functions as a near-UV photosensor. Also catalyzes the transfer of sulfur to the sulfur carrier protein ThiS, forming ThiS-thiocarboxylate. This is a step in the synthesis of thiazole, in the thiamine biosynthesis pathway. The sulfur is donated as persulfide by IscS. The protein is Probable tRNA sulfurtransferase of Streptococcus pneumoniae (strain ATCC 700669 / Spain 23F-1).